The chain runs to 360 residues: Peptide chain release factor 1 (360 aa).

Gln235 carries the N5-methylglutamine modification.

It belongs to the prokaryotic/mitochondrial release factor family. Post-translationally, methylated by PrmC. Methylation increases the termination efficiency of RF1.

The protein resides in the cytoplasm. In terms of biological role, peptide chain release factor 1 directs the termination of translation in response to the peptide chain termination codons UAG and UAA. This is Peptide chain release factor 1 from Burkholderia mallei (strain NCTC 10247).